Consider the following 503-residue polypeptide: Glucosaminyl-phosphatidylinositol-acyltransferase PIGW (503 aa).

At 1 to 21 the chain is on the lumenal side; that stretch reads MSQKQLKEAFVRNLSGTSVLE. Asparagine 13 carries N-linked (GlcNAc...) asparagine glycosylation. The helical transmembrane segment at 22 to 42 threads the bilayer; sequence VTQGLCFPAFCILCRGLWIIF. Over 43–48 the chain is Cytoplasmic; it reads SQHVCS. A helical transmembrane segment spans residues 49 to 71; the sequence is FSNTWSTRFLMDFVVLIVPLVIT. The Lumenal portion of the chain corresponds to 72-74; it reads LTV. Residues 75–97 form a helical membrane-spanning segment; that stretch reads LSSFILLENLTVIVWGAWLLYQI. Over 98 to 131 the chain is Cytoplasmic; sequence YHRRTCYAKVPVQKVFANFLKISLESEYNPAITC. The helical transmembrane segment at 132–152 threads the bilayer; that stretch reads YRVINSVFTAIAILAVDFPLF. Residues 153–160 lie on the Lumenal side of the membrane; the sequence is PRRFAKTE. A helical transmembrane segment spans residues 161 to 181; it reads LYGTGAMDFGVGGFIFGAAMV. Topologically, residues 182–201 are cytoplasmic; that stretch reads CPEVRRKSIEESRFNYLRKS. The chain crosses the membrane as a helical span at residues 202 to 222; sequence LYSVWPLVFLGMGRLVIIKSI. Topologically, residues 223–236 are lumenal; the sequence is GYQEHSTEYGIHWN. Residues 237 to 257 form a helical membrane-spanning segment; the sequence is FFFTIIVVRLVTSLLLIIFPL. Residues 258 to 259 are Cytoplasmic-facing; that stretch reads NK. Residues 260–280 form a helical membrane-spanning segment; sequence SWIVAVSITVVYQLALDYTPL. Over 281–304 the chain is Lumenal; the sequence is KRILLYGTDGSGTRVGFLNANREG. A helical transmembrane segment spans residues 305–325; the sequence is IISTLGYVTIHMAGVQTGLYV. Residues 326-339 lie on the Cytoplasmic side of the membrane; that stretch reads LKGRAQVRDWIKAT. Residues 340-360 traverse the membrane as a helical segment; the sequence is CWVFSVAVGFFISLHIVQVNI. Over 361–380 the chain is Lumenal; that stretch reads EAVSRRMANLAFCLWVVASS. The helical transmembrane segment at 381–401 threads the bilayer; the sequence is LMLLSCLLLSGIILSFAQFLI. Residues 402-447 lie on the Cytoplasmic side of the membrane; it reads KGSLVPCSWKLIQSPTTHKNHSESLILEAEKNQPSLCLITALNRNQ. Residue serine 415 is modified to Phosphoserine. The helical transmembrane segment at 448–468 threads the bilayer; that stretch reads LFFFLLSNITTGLINLTMDTL. The Lumenal segment spans residues 469–472; it reads HTGA. The helical transmembrane segment at 473-493 threads the bilayer; that stretch reads LWTLVVLSIYMFTNCLVIYVL. Residues 494–503 lie on the Cytoplasmic side of the membrane; the sequence is DLQGKTIKFW.

It belongs to the PIGW family.

Its subcellular location is the endoplasmic reticulum membrane. It functions in the pathway glycolipid biosynthesis; glycosylphosphatidylinositol-anchor biosynthesis. Its function is as follows. Acyltransferase that catalyzes the acyl transfer from an acyl-CoA at the 2-OH position of the inositol ring of glucosaminyl phosphatidylinositol (GlcN-PI) to generate GlcN-(acyl)PI and participates in the fourth step of GPI-anchor biosynthesi. Required for the transport of GPI-anchored proteins to the plasma membrane. Acetylation during GPI-anchor biosynthesis is not essential for the subsequent mannosylation and is usually removed soon after the attachment of GPIs to proteins. The chain is Glucosaminyl-phosphatidylinositol-acyltransferase PIGW from Mus musculus (Mouse).